The sequence spans 620 residues: Probable potassium transport system protein Kup (620 aa).

12 consecutive transmembrane segments (helical) span residues 7–27, 44–64, 98–118, 135–155, 166–186, 201–221, 245–265, 278–298, 335–355, 361–381, 394–414, and 417–437; these read LALA…LYAI, VFGV…LKYL, FFLI…GMIT, PAFH…LFLF, LFGP…LVEI, GIMF…AVFL, WAFL…ALLL, LVPS…TIIA, IYVP…VIGF, LAAA…ILFY, VLNV…GASA, and LFHG…VMMT.

This sequence belongs to the HAK/KUP transporter (TC 2.A.72) family.

The protein localises to the cell inner membrane. It catalyses the reaction K(+)(in) + H(+)(in) = K(+)(out) + H(+)(out). In terms of biological role, transport of potassium into the cell. Likely operates as a K(+):H(+) symporter. This Chlorobium chlorochromatii (strain CaD3) protein is Probable potassium transport system protein Kup.